A 153-amino-acid chain; its full sequence is Interleukin-4 (153 aa).

The N-terminal stretch at 1 to 24 is a signal peptide; sequence MGLTSQLLPPLFFLLACAGNFVHG. Cystine bridges form between Cys27–Cys151, Cys48–Cys89, and Cys70–Cys123. An N-linked (GlcNAc...) asparagine glycan is attached at Asn62.

This sequence belongs to the IL-4/IL-13 family.

The protein resides in the secreted. Functionally, participates in at least several B-cell activation processes as well as of other cell types. It is a costimulator of DNA-synthesis. It induces the expression of class II MHC molecules on resting B-cells. It enhances both secretion and cell surface expression of IgE and IgG1. It also regulates the expression of the low affinity Fc receptor for IgE (CD23) on both lymphocytes and monocytes. Positively regulates IL31RA expression in macrophages. Stimulates autophagy in dendritic cells by interfering with mTORC1 signaling and through the induction of RUFY4. In Macaca fascicularis (Crab-eating macaque), this protein is Interleukin-4 (IL4).